The following is a 197-amino-acid chain: Holliday junction branch migration complex subunit RuvA (197 aa).

A domain I region spans residues 1–64 (MIASVRGTLI…EDALTLYGFK (64 aa)). Residues 65–145 (TVEQRQLFET…GLPVAPGVSP (81 aa)) form a domain II region. The flexible linker stretch occupies residues 146 to 153 (AVAAVNAE). Positions 153-197 (ELSEMLVSLGFSSAEASTAIAALPPDAPLDLEERLRLALRYFGAR) are domain III.

The protein belongs to the RuvA family. Homotetramer. Forms an RuvA(8)-RuvB(12)-Holliday junction (HJ) complex. HJ DNA is sandwiched between 2 RuvA tetramers; dsDNA enters through RuvA and exits via RuvB. An RuvB hexamer assembles on each DNA strand where it exits the tetramer. Each RuvB hexamer is contacted by two RuvA subunits (via domain III) on 2 adjacent RuvB subunits; this complex drives branch migration. In the full resolvosome a probable DNA-RuvA(4)-RuvB(12)-RuvC(2) complex forms which resolves the HJ.

The protein localises to the cytoplasm. Functionally, the RuvA-RuvB-RuvC complex processes Holliday junction (HJ) DNA during genetic recombination and DNA repair, while the RuvA-RuvB complex plays an important role in the rescue of blocked DNA replication forks via replication fork reversal (RFR). RuvA specifically binds to HJ cruciform DNA, conferring on it an open structure. The RuvB hexamer acts as an ATP-dependent pump, pulling dsDNA into and through the RuvAB complex. HJ branch migration allows RuvC to scan DNA until it finds its consensus sequence, where it cleaves and resolves the cruciform DNA. This is Holliday junction branch migration complex subunit RuvA from Roseiflexus castenholzii (strain DSM 13941 / HLO8).